An 879-amino-acid polypeptide reads, in one-letter code: Beta-mannosidase (879 aa).

Positions Met1–Ala17 are cleaved as a signal peptide. 2 N-linked (GlcNAc...) asparagine glycosylation sites follow: Asn35 and Asn77. Cys167 and Cys176 are joined by a disulfide. A substrate-binding site is contributed by Trp190–Trp192. N-linked (GlcNAc...) asparagine glycosylation occurs at Asn297. Position 456 (Asn456) interacts with substrate. Glu457 acts as the Proton donor in catalysis. Cystine bridges form between Cys540-Cys629, Cys732-Cys761, and Cys764-Cys769. The Nucleophile role is filled by Glu554. N-linked (GlcNAc...) asparagine glycosylation occurs at Asn803.

The protein belongs to the glycosyl hydrolase 2 family. In terms of assembly, monomer. Post-translationally, N-glycosylated. Detected in kidney (at protein level). Found in spleen and to a lesser extent in liver. Not detected in kidney or brain.

The protein localises to the lysosome. The enzyme catalyses Hydrolysis of terminal, non-reducing beta-D-mannose residues in beta-D-mannosides.. It functions in the pathway glycan metabolism; N-glycan degradation. Its function is as follows. Exoglycosidase that cleaves the single beta-linked mannose residue from the non-reducing end of all N-linked glycoprotein oligosaccharides. This chain is Beta-mannosidase (MANBA), found in Capra hircus (Goat).